The sequence spans 305 residues: MRIAVLGGGAWGTTLADLAAAQDHQVRVWSRSGALALGEVLAQAEAVFSCLPMAAVAGVIDQVIALGLPAGVIVVNATKGLDRRTARPASSLWQARFADHPLVVLSGPNLAAEIRAGLPAATVVASADGQAAGRIQQCLASERFRVYTSADWRGVELGGVLKNVIAIAAGVSDGLGLGANAKAALITRGLAEMIRVGTHWGGLAETFYGLSGLGDLLTTCNSPLSRNYQVGFGLGKGQSLEAVLERLEGTAEGVATAAILAEYAQRSALEVPITDQICAVLGGLRPPTEALAALMTRRLREEDGG.

NADPH-binding residues include Trp-11, Arg-31, and Lys-79. Lys-79 and Gly-107 together coordinate sn-glycerol 3-phosphate. NADPH is bound at residue Ala-111. Residues Lys-162, Asp-215, Ser-225, Arg-226, and Asn-227 each coordinate sn-glycerol 3-phosphate. Lys-162 acts as the Proton acceptor in catalysis. Arg-226 contributes to the NADPH binding site. Glu-252 lines the NADPH pocket.

The protein belongs to the NAD-dependent glycerol-3-phosphate dehydrogenase family.

Its subcellular location is the cytoplasm. It carries out the reaction sn-glycerol 3-phosphate + NAD(+) = dihydroxyacetone phosphate + NADH + H(+). The catalysed reaction is sn-glycerol 3-phosphate + NADP(+) = dihydroxyacetone phosphate + NADPH + H(+). It functions in the pathway membrane lipid metabolism; glycerophospholipid metabolism. Its function is as follows. Catalyzes the reduction of the glycolytic intermediate dihydroxyacetone phosphate (DHAP) to sn-glycerol 3-phosphate (G3P), the key precursor for phospholipid synthesis. The polypeptide is Glycerol-3-phosphate dehydrogenase [NAD(P)+] (Gloeobacter violaceus (strain ATCC 29082 / PCC 7421)).